Reading from the N-terminus, the 348-residue chain is MIKIAIDAMGGDYAPNAVIEGVEQARDLFEDTVFLLYGQRDVINAQLKNRDRIQIINADEVITMEDEPVRAVRRKKHSSIVMAAQAVKDGQADAFFSAGNSGAVLAAGLFIVGRIKGIDRPGLVTVLPVVRNANQSNFVMMDIGANADSKPLNLQQYGVLGTYYAERMMQAKHPRVALLNNGTEDDKGNKVHKAAFELLSQTDGINFVGNVESRDLLNGVADVVVTDGFTGNAVLKSIEGTARSMLGLVKDAVYNTGISGKLGGLLLKNGFNEIRSQMDYSQYGGAVLLGLKAPVVKTHGSSKAPTIVNTIRQIRQMVSTDIVPGVAEYFANQQANQQASVDIPAEND.

It belongs to the PlsX family. Homodimer. Probably interacts with PlsY.

It is found in the cytoplasm. The catalysed reaction is a fatty acyl-[ACP] + phosphate = an acyl phosphate + holo-[ACP]. Its pathway is lipid metabolism; phospholipid metabolism. In terms of biological role, catalyzes the reversible formation of acyl-phosphate (acyl-PO(4)) from acyl-[acyl-carrier-protein] (acyl-ACP). This enzyme utilizes acyl-ACP as fatty acyl donor, but not acyl-CoA. The protein is Phosphate acyltransferase of Lactiplantibacillus plantarum (strain ATCC BAA-793 / NCIMB 8826 / WCFS1) (Lactobacillus plantarum).